The sequence spans 150 residues: Large ribosomal subunit protein bL9 (150 aa).

The protein belongs to the bacterial ribosomal protein bL9 family.

Its function is as follows. Binds to the 23S rRNA. The sequence is that of Large ribosomal subunit protein bL9 from Pseudoalteromonas translucida (strain TAC 125).